We begin with the raw amino-acid sequence, 381 residues long: MNNKKKIVKIFFYDKILFFLLISLSIIGIIIVSSASISFGIRLHNDYFYFAKRNLLYFFLSFFLFFQIIRIPINQLEKYNKIALLINLFLLIIVFIIGNSINGAIRWIKIGFFSIQPSECSKLILFFYISDYIVKKNKELKNKLWGFLKPIIIMLIFVILLLMQPDLGNSLILFLTTLLLFFLAGINLWKCCFMFLFGLLTIFILIIFKPYRIRRILSFLDPWEDPFNSGYQLTQSLMALGRGKIIGTGLGNSIQKLEYLPEAYTDFIFSILGEELGYIGSIIILIMLFFVIFRIFLIGKNSFIQKKFFSGYFSFSVGIWISLQTIMNVGGVIGILPIKGLTLPFISYGGSSLITIFSAIAIVIRSDFELRINKYQAYLKQ.

Topologically, residues 1 to 15 (MNNKKKIVKIFFYDK) are cytoplasmic. A helical membrane pass occupies residues 16–36 (ILFFLLISLSIIGIIIVSSAS). The Periplasmic segment spans residues 37-53 (ISFGIRLHNDYFYFAKR). Residues 54-74 (NLLYFFLSFFLFFQIIRIPIN) form a helical membrane-spanning segment. Residues 75-81 (QLEKYNK) lie on the Cytoplasmic side of the membrane. A helical membrane pass occupies residues 82-102 (IALLINLFLLIIVFIIGNSIN). Over 103–109 (GAIRWIK) the chain is Periplasmic. A helical transmembrane segment spans residues 110-130 (IGFFSIQPSECSKLILFFYIS). At 131-143 (DYIVKKNKELKNK) the chain is on the cytoplasmic side. A helical transmembrane segment spans residues 144–164 (LWGFLKPIIIMLIFVILLLMQ). The Periplasmic portion of the chain corresponds to 165–166 (PD). Helical transmembrane passes span 167–187 (LGNSLILFLTTLLLFFLAGIN) and 188–208 (LWKCCFMFLFGLLTIFILIIF). Over 209 to 278 (KPYRIRRILS…FSILGEELGY (70 aa)) the chain is Periplasmic. A helical transmembrane segment spans residues 279–299 (IGSIIILIMLFFVIFRIFLIG). The Cytoplasmic portion of the chain corresponds to 300–317 (KNSFIQKKFFSGYFSFSV). Residues 318 to 338 (GIWISLQTIMNVGGVIGILPI) form a helical membrane-spanning segment. At 339-343 (KGLTL) the chain is on the periplasmic side. A helical membrane pass occupies residues 344–364 (PFISYGGSSLITIFSAIAIVI). Topologically, residues 365-381 (RSDFELRINKYQAYLKQ) are cytoplasmic.

It belongs to the SEDS family. FtsW subfamily.

It localises to the cell inner membrane. It carries out the reaction [GlcNAc-(1-&gt;4)-Mur2Ac(oyl-L-Ala-gamma-D-Glu-L-Lys-D-Ala-D-Ala)](n)-di-trans,octa-cis-undecaprenyl diphosphate + beta-D-GlcNAc-(1-&gt;4)-Mur2Ac(oyl-L-Ala-gamma-D-Glu-L-Lys-D-Ala-D-Ala)-di-trans,octa-cis-undecaprenyl diphosphate = [GlcNAc-(1-&gt;4)-Mur2Ac(oyl-L-Ala-gamma-D-Glu-L-Lys-D-Ala-D-Ala)](n+1)-di-trans,octa-cis-undecaprenyl diphosphate + di-trans,octa-cis-undecaprenyl diphosphate + H(+). It functions in the pathway cell wall biogenesis; peptidoglycan biosynthesis. Peptidoglycan polymerase that is essential for cell division. The sequence is that of Probable peptidoglycan glycosyltransferase FtsW from Wigglesworthia glossinidia brevipalpis.